Consider the following 123-residue polypeptide: Small ribosomal subunit protein uS12 (123 aa).

Residues 1–47 (MPTINQLVRKGRKKAEKKQSTPALKGGPQKRGVCTRVYTSTPKKPNS) form a disordered region. A 3-methylthioaspartic acid modification is found at aspartate 89.

The protein belongs to the universal ribosomal protein uS12 family. As to quaternary structure, part of the 30S ribosomal subunit. Contacts proteins S8 and S17. May interact with IF1 in the 30S initiation complex.

In terms of biological role, with S4 and S5 plays an important role in translational accuracy. Interacts with and stabilizes bases of the 16S rRNA that are involved in tRNA selection in the A site and with the mRNA backbone. Located at the interface of the 30S and 50S subunits, it traverses the body of the 30S subunit contacting proteins on the other side and probably holding the rRNA structure together. The combined cluster of proteins S8, S12 and S17 appears to hold together the shoulder and platform of the 30S subunit. This Desulforapulum autotrophicum (strain ATCC 43914 / DSM 3382 / VKM B-1955 / HRM2) (Desulfobacterium autotrophicum) protein is Small ribosomal subunit protein uS12.